Consider the following 493-residue polypeptide: C2H2-type transcription factor ffmA (493 aa).

Low complexity predominate over residues 1–18 (MPMPQYTMQPQYPVSQPH). 3 disordered regions span residues 1–50 (MPMP…SRYP), 68–140 (TTVG…YPDG), and 164–202 (EPPR…KNTT). Polar residues-rich tracts occupy residues 69–79 (TVGSLPPSTFL) and 192–202 (NGVNGTAKNTT). The C2H2-type 1 zinc-finger motif lies at 212–234 (FPCPHCNKTYLHAKHLKRHLLRH). The C2H2-type 2; degenerate zinc finger occupies 240–265 (YMCVLCKDTFSRSDILKRHFQKCSIR). 2 stretches are compositionally biased toward polar residues: residues 288–307 (QAAA…TVPP) and 484–493 (ASTTLGGDGK). 2 disordered regions span residues 288–316 (QAAA…GATF) and 468–493 (TTTA…GDGK).

The protein belongs to the krueppel C2H2-type zinc-finger protein family.

It localises to the nucleus. Transcription factor that acts in coordination with atrR to regulate the expression of the ABC-type multidrug transporter abcG1 and thus plays a role in azole susceptibility. Regulates the expression of genes involved in fermentation. Is able to promote expression from the yeast FLO11 promoter. This is C2H2-type transcription factor ffmA from Aspergillus fumigatus (strain CBS 144.89 / FGSC A1163 / CEA10) (Neosartorya fumigata).